Consider the following 281-residue polypeptide: Pantothenate synthetase (281 aa).

Residue M17–H24 coordinates ATP. The active-site Proton donor is the H24. Q48 contributes to the (R)-pantoate binding site. Beta-alanine is bound at residue Q48. G134–D137 contacts ATP. A (R)-pantoate-binding site is contributed by Q140. ATP-binding positions include V163 and L176–R179.

This sequence belongs to the pantothenate synthetase family. As to quaternary structure, homodimer.

It is found in the cytoplasm. It carries out the reaction (R)-pantoate + beta-alanine + ATP = (R)-pantothenate + AMP + diphosphate + H(+). The protein operates within cofactor biosynthesis; (R)-pantothenate biosynthesis; (R)-pantothenate from (R)-pantoate and beta-alanine: step 1/1. Its function is as follows. Catalyzes the condensation of pantoate with beta-alanine in an ATP-dependent reaction via a pantoyl-adenylate intermediate. In Deinococcus radiodurans (strain ATCC 13939 / DSM 20539 / JCM 16871 / CCUG 27074 / LMG 4051 / NBRC 15346 / NCIMB 9279 / VKM B-1422 / R1), this protein is Pantothenate synthetase.